Here is a 398-residue protein sequence, read N- to C-terminus: Probable aminomethyltransferase (398 aa).

It belongs to the GcvT family. The glycine cleavage system is composed of four proteins: P, T, L and H.

It carries out the reaction N(6)-[(R)-S(8)-aminomethyldihydrolipoyl]-L-lysyl-[protein] + (6S)-5,6,7,8-tetrahydrofolate = N(6)-[(R)-dihydrolipoyl]-L-lysyl-[protein] + (6R)-5,10-methylene-5,6,7,8-tetrahydrofolate + NH4(+). Its function is as follows. The glycine cleavage system catalyzes the degradation of glycine. The sequence is that of Probable aminomethyltransferase from Pyrococcus furiosus (strain ATCC 43587 / DSM 3638 / JCM 8422 / Vc1).